Reading from the N-terminus, the 448-residue chain is N-succinylarginine dihydrolase (448 aa).

Substrate-binding positions include 19 to 28, asparagine 110, and 137 to 138; these read GGLSYGNVAS and HR. The active site involves glutamate 174. Residue arginine 214 coordinates substrate. Histidine 250 is an active-site residue. Substrate-binding residues include aspartate 252 and asparagine 365. The active-site Nucleophile is cysteine 371.

It belongs to the succinylarginine dihydrolase family. In terms of assembly, homodimer.

It carries out the reaction N(2)-succinyl-L-arginine + 2 H2O + 2 H(+) = N(2)-succinyl-L-ornithine + 2 NH4(+) + CO2. Its pathway is amino-acid degradation; L-arginine degradation via AST pathway; L-glutamate and succinate from L-arginine: step 2/5. In terms of biological role, catalyzes the hydrolysis of N(2)-succinylarginine into N(2)-succinylornithine, ammonia and CO(2). The polypeptide is N-succinylarginine dihydrolase (Pseudomonas syringae pv. tomato (strain ATCC BAA-871 / DC3000)).